The chain runs to 448 residues: JmjC domain-containing protein D (448 aa).

The 144-residue stretch at 305 to 448 folds into the JmjC domain; that stretch reads EQIPQLRNDI…SLSQSFSIFP (144 aa).

This chain is JmjC domain-containing protein D (jcdD), found in Dictyostelium discoideum (Social amoeba).